We begin with the raw amino-acid sequence, 232 residues long: Small ribosomal subunit protein uS3 (232 aa).

The KH type-2 domain occupies Ile-39–Lys-107. The disordered stretch occupies residues Gln-213–Glu-232. The segment covering Gly-222 to Glu-232 has biased composition (basic residues).

The protein belongs to the universal ribosomal protein uS3 family. As to quaternary structure, part of the 30S ribosomal subunit. Forms a tight complex with proteins S10 and S14.

Functionally, binds the lower part of the 30S subunit head. Binds mRNA in the 70S ribosome, positioning it for translation. In Sulfurovum sp. (strain NBC37-1), this protein is Small ribosomal subunit protein uS3.